We begin with the raw amino-acid sequence, 122 residues long: Large ribosomal subunit protein uL18 (122 aa).

This sequence belongs to the universal ribosomal protein uL18 family. As to quaternary structure, part of the 50S ribosomal subunit; part of the 5S rRNA/L5/L18/L25 subcomplex. Contacts the 5S and 23S rRNAs.

Functionally, this is one of the proteins that bind and probably mediate the attachment of the 5S RNA into the large ribosomal subunit, where it forms part of the central protuberance. The chain is Large ribosomal subunit protein uL18 from Thermosipho africanus (strain TCF52B).